Consider the following 398-residue polypeptide: Acetate kinase (398 aa).

Asn8 contributes to the Mg(2+) binding site. Lys15 is an ATP binding site. Residue Arg89 participates in substrate binding. Asp146 serves as the catalytic Proton donor/acceptor. ATP-binding positions include 206–210 (HIGNG), 283–285 (DMR), and 331–335 (GMGEN). Glu383 contributes to the Mg(2+) binding site.

Belongs to the acetokinase family. As to quaternary structure, homodimer. The cofactor is Mg(2+). Requires Mn(2+) as cofactor.

The protein resides in the cytoplasm. It catalyses the reaction acetate + ATP = acetyl phosphate + ADP. Its pathway is metabolic intermediate biosynthesis; acetyl-CoA biosynthesis; acetyl-CoA from acetate: step 1/2. Catalyzes the formation of acetyl phosphate from acetate and ATP. Can also catalyze the reverse reaction. In Streptococcus pyogenes serotype M28 (strain MGAS6180), this protein is Acetate kinase.